We begin with the raw amino-acid sequence, 419 residues long: 2-amino-3-ketobutyrate coenzyme A ligase, mitochondrial (419 aa).

Residues 1–21 (MWAGRVLHAALSRAPRESRAQ) constitute a mitochondrion transit peptide. Residue Lys-45 is modified to N6-acetyllysine; alternate. Lys-45 carries the post-translational modification N6-succinyllysine; alternate. 134–135 (CF) contributes to the pyridoxal 5'-phosphate binding site. His-159 provides a ligand contact to substrate. The residue at position 187 (Lys-187) is an N6-acetyllysine; alternate. Residue Lys-187 is modified to N6-succinyllysine; alternate. Pyridoxal 5'-phosphate is bound by residues Ser-206, 231–234 (DESH), 262–265 (TLGK), and 295–296 (SN). At Lys-265 the chain carries N6-(pyridoxal phosphate)lysine. Residues Lys-326 and Lys-368 each carry the N6-succinyllysine modification. N6-acetyllysine; alternate is present on Lys-383. An N6-succinyllysine; alternate modification is found at Lys-383. Substrate is bound at residue Arg-389.

It belongs to the class-II pyridoxal-phosphate-dependent aminotransferase family. Pyridoxal 5'-phosphate is required as a cofactor.

It localises to the mitochondrion. The protein localises to the nucleus. The enzyme catalyses glycine + acetyl-CoA = (2S)-2-amino-3-oxobutanoate + CoA. Its pathway is amino-acid degradation; L-threonine degradation via oxydo-reductase pathway; glycine from L-threonine: step 2/2. Pyridoxal phosphate (PLP) dependent enzyme, which catalyzes the cleavage of 2-amino-3-oxobutanoate to glycine and acetyl-CoA. Catalyzes the second reaction step on the main metabolic degradation pathway for L-threonine. This is 2-amino-3-ketobutyrate coenzyme A ligase, mitochondrial (GCAT) from Bos taurus (Bovine).